We begin with the raw amino-acid sequence, 79 residues long: Putative sulfur carrier protein TM_0983 (79 aa).

The Cysteine persulfide intermediate role is filled by Cys-17.

Belongs to the sulfur carrier protein TusA family.

This Thermotoga maritima (strain ATCC 43589 / DSM 3109 / JCM 10099 / NBRC 100826 / MSB8) protein is Putative sulfur carrier protein TM_0983.